Consider the following 412-residue polypeptide: Serine hydroxymethyltransferase (412 aa).

Residues Leu117 and 121-123 contribute to the (6S)-5,6,7,8-tetrahydrofolate site; that span reads GHL. Lys226 is subject to N6-(pyridoxal phosphate)lysine.

The protein belongs to the SHMT family. In terms of assembly, homodimer. Pyridoxal 5'-phosphate serves as cofactor.

It localises to the cytoplasm. The catalysed reaction is (6R)-5,10-methylene-5,6,7,8-tetrahydrofolate + glycine + H2O = (6S)-5,6,7,8-tetrahydrofolate + L-serine. The protein operates within one-carbon metabolism; tetrahydrofolate interconversion. Its pathway is amino-acid biosynthesis; glycine biosynthesis; glycine from L-serine: step 1/1. Its function is as follows. Catalyzes the reversible interconversion of serine and glycine with tetrahydrofolate (THF) serving as the one-carbon carrier. This reaction serves as the major source of one-carbon groups required for the biosynthesis of purines, thymidylate, methionine, and other important biomolecules. Also exhibits THF-independent aldolase activity toward beta-hydroxyamino acids, producing glycine and aldehydes, via a retro-aldol mechanism. The sequence is that of Serine hydroxymethyltransferase from Staphylococcus haemolyticus (strain JCSC1435).